Reading from the N-terminus, the 441-residue chain is DNA double-strand break repair protein Mre11 (441 aa).

Mn(2+) contacts are provided by Asp-9, His-11, Asp-50, and Asn-85. The active-site Proton donor is the His-86. Mn(2+) contacts are provided by His-150, Asp-181, and His-183. Residues 360 to 441 (ESLLSDDPDA…SRDSSLGDFA (82 aa)) form a disordered region. Composition is skewed to acidic residues over residues 379 to 403 (AEAE…EDTA) and 411 to 425 (TDTD…DSET).

Belongs to the MRE11/RAD32 family. As to quaternary structure, homodimer. Forms a heterotetramer composed of two Mre11 subunits and two Rad50 subunits. It depends on Mn(2+) as a cofactor.

With respect to regulation, nuclease activity is regulated by Rad50. Its function is as follows. Part of the Rad50/Mre11 complex, which is involved in the early steps of DNA double-strand break (DSB) repair. Mre11 binds to DSB ends and has both double-stranded 3'-5' exonuclease activity and single-stranded endonuclease activity. In polyploid organisms, the Rad50/Mre11 complex appears to restrain the repair of double-strand breaks by homologous recombination, allowing another pathway to act as the primary mode of repair. The sequence is that of DNA double-strand break repair protein Mre11 from Haloferax volcanii (strain ATCC 29605 / DSM 3757 / JCM 8879 / NBRC 14742 / NCIMB 2012 / VKM B-1768 / DS2) (Halobacterium volcanii).